A 197-amino-acid chain; its full sequence is MRTGSITRKTEETDIAVSVNLDGTGTYKVDTGIGFLDHMIEQFSRHSLIDIECRVKGDLHVDQHHTTEDSAIALGQAISQALGDKKGITRYGHTYSPMDEALCRVALDISGRPVLVWKAAFTQPRLGEMDTELFEHWFQSISQAAGITLHIESLYGSNNHHIIEGIYKGFARAMRAAIAIDPRKADAVPSTKGILGG.

Belongs to the imidazoleglycerol-phosphate dehydratase family.

Its subcellular location is the cytoplasm. The catalysed reaction is D-erythro-1-(imidazol-4-yl)glycerol 3-phosphate = 3-(imidazol-4-yl)-2-oxopropyl phosphate + H2O. Its pathway is amino-acid biosynthesis; L-histidine biosynthesis; L-histidine from 5-phospho-alpha-D-ribose 1-diphosphate: step 6/9. The polypeptide is Imidazoleglycerol-phosphate dehydratase (Novosphingobium aromaticivorans (strain ATCC 700278 / DSM 12444 / CCUG 56034 / CIP 105152 / NBRC 16084 / F199)).